Here is a 370-residue protein sequence, read N- to C-terminus: Phosphoribosylformylglycinamidine cyclo-ligase (370 aa).

This sequence belongs to the AIR synthase family.

It localises to the cytoplasm. It carries out the reaction 2-formamido-N(1)-(5-O-phospho-beta-D-ribosyl)acetamidine + ATP = 5-amino-1-(5-phospho-beta-D-ribosyl)imidazole + ADP + phosphate + H(+). It functions in the pathway purine metabolism; IMP biosynthesis via de novo pathway; 5-amino-1-(5-phospho-D-ribosyl)imidazole from N(2)-formyl-N(1)-(5-phospho-D-ribosyl)glycinamide: step 2/2. The polypeptide is Phosphoribosylformylglycinamidine cyclo-ligase (Rhodospirillum rubrum (strain ATCC 11170 / ATH 1.1.1 / DSM 467 / LMG 4362 / NCIMB 8255 / S1)).